We begin with the raw amino-acid sequence, 110 residues long: Quaternary ammonium compound-resistance protein QacF (110 aa).

The next 4 helical transmembrane spans lie at 1–21 (MKNW…TSAL), 31–51 (VPSV…SLAL), 58–78 (IAYA…AWIF), and 85–105 (FWAF…NLLS).

This sequence belongs to the drug/metabolite transporter (DMT) superfamily. Small multidrug resistance (SMR) (TC 2.A.7.1) family.

The protein localises to the cell membrane. In terms of biological role, multidrug exporter. Is implicated for the resistance to bacteriocidal quaternary ammonium compounds. In Klebsiella aerogenes (Enterobacter aerogenes), this protein is Quaternary ammonium compound-resistance protein QacF (qacF).